Here is a 245-residue protein sequence, read N- to C-terminus: Ribonuclease 3 (245 aa).

An RNase III domain is found at 24-146; it reads YTVFSQKLGY…IIGAIYLESG (123 aa). A Mg(2+)-binding site is contributed by Glu59. The active site involves Asp63. Mg(2+) is bound by residues Asn132 and Glu135. Residue Glu135 is part of the active site. The region spanning 173 to 243 is the DRBM domain; it reads DPKTLLQEYL…ARRAYKLAVV (71 aa).

It belongs to the ribonuclease III family. Homodimer. Requires Mg(2+) as cofactor.

The protein localises to the cytoplasm. The catalysed reaction is Endonucleolytic cleavage to 5'-phosphomonoester.. In terms of biological role, digests double-stranded RNA. Involved in the processing of primary rRNA transcript to yield the immediate precursors to the large and small rRNAs (23S and 16S). Processes some mRNAs, and tRNAs when they are encoded in the rRNA operon. Processes pre-crRNA and tracrRNA of type II CRISPR loci if present in the organism. The polypeptide is Ribonuclease 3 (Nitrosomonas eutropha (strain DSM 101675 / C91 / Nm57)).